The primary structure comprises 440 residues: Chromosome partition protein MukF (440 aa).

Residues 208-236 (LSETSGTLRELQDTLEAAGDKLQANLLRI) are leucine-zipper.

The protein belongs to the MukF family. As to quaternary structure, interacts, and probably forms a ternary complex, with MukE and MukB via its C-terminal region. The complex formation is stimulated by calcium or magnesium. It is required for an interaction between MukE and MukB.

Its subcellular location is the cytoplasm. It localises to the nucleoid. Its function is as follows. Involved in chromosome condensation, segregation and cell cycle progression. May participate in facilitating chromosome segregation by condensation DNA from both sides of a centrally located replisome during cell division. Not required for mini-F plasmid partitioning. Probably acts via its interaction with MukB and MukE. Overexpression results in anucleate cells. It has a calcium binding activity. This Yersinia enterocolitica serotype O:8 / biotype 1B (strain NCTC 13174 / 8081) protein is Chromosome partition protein MukF.